The primary structure comprises 137 residues: Large ribosomal subunit protein uL16 (137 aa).

This sequence belongs to the universal ribosomal protein uL16 family. In terms of assembly, part of the 50S ribosomal subunit.

Its function is as follows. Binds 23S rRNA and is also seen to make contacts with the A and possibly P site tRNAs. In Rhizobium johnstonii (strain DSM 114642 / LMG 32736 / 3841) (Rhizobium leguminosarum bv. viciae), this protein is Large ribosomal subunit protein uL16.